The sequence spans 152 residues: Large ribosomal subunit protein uL13 (152 aa).

It belongs to the universal ribosomal protein uL13 family. In terms of assembly, part of the 50S ribosomal subunit.

This protein is one of the early assembly proteins of the 50S ribosomal subunit, although it is not seen to bind rRNA by itself. It is important during the early stages of 50S assembly. In Wolbachia pipientis wMel, this protein is Large ribosomal subunit protein uL13.